Consider the following 256-residue polypeptide: MDILGRFVRESKKMSPGLKTIMEKVLRGQSLNSFHSEELRFLHLVICKMYDFCLNVYILKESIINTGTRDNEVLSRKVPVEIWKIMYDACKSIGVENTMLIDDSSRGQLWLHLNSNIDLLQGMSQFIFSKLGIKHFVKISPQNITDGNYLFNLGSVLPYRLILILQFCLIFWGKEQEEAWVRFFTGKIFMLYLLITGHLLIQKTFILQAASTGYCGPLEIIGDDLRSYLGIHTYMTNDLQHIPSLDLLFIFNNNFY.

It belongs to the herpesviridae UL79 family.

This is Gene 18 protein (18) from Saimiriine herpesvirus 2 (strain 11) (SaHV-2).